The primary structure comprises 211 residues: Dual specificity protein phosphatase 26 (211 aa).

The Tyrosine-protein phosphatase domain occupies 60-207 (NHADEVWPGL…LLALDRRLRQ (148 aa)). Cys152 (phosphocysteine intermediate) is an active-site residue.

Belongs to the protein-tyrosine phosphatase family. Non-receptor class dual specificity subfamily. As to quaternary structure, interacts with HSF4. As to expression, brain and skeletal muscle. In the brain it is expressed ubiquitously except in the hippocampus.

It localises to the cytoplasm. Its subcellular location is the nucleus. It is found in the golgi apparatus. The catalysed reaction is O-phospho-L-tyrosyl-[protein] + H2O = L-tyrosyl-[protein] + phosphate. It catalyses the reaction O-phospho-L-seryl-[protein] + H2O = L-seryl-[protein] + phosphate. The enzyme catalyses O-phospho-L-threonyl-[protein] + H2O = L-threonyl-[protein] + phosphate. In terms of biological role, inactivates MAPK1 and MAPK3 which leads to dephosphorylation of heat shock factor protein 4 and a reduction in its DNA-binding activity. This Mus musculus (Mouse) protein is Dual specificity protein phosphatase 26 (Dusp26).